A 205-amino-acid chain; its full sequence is Large ribosomal subunit protein eL15 (205 aa).

Disordered regions lie at residues 70-90 and 172-197; these read GRKR…HGVN and RGLR…KRRN.

The protein belongs to the eukaryotic ribosomal protein eL15 family.

The protein is Large ribosomal subunit protein eL15 (rpl15-1) of Dictyostelium discoideum (Social amoeba).